The sequence spans 447 residues: Argininosuccinate synthase (447 aa).

ATP-binding positions include 17–25 (AFSGGLDTS) and alanine 43. L-citrulline is bound at residue tyrosine 99. Glycine 129 and threonine 131 together coordinate ATP. L-aspartate-binding residues include threonine 131, asparagine 135, and aspartate 136. L-citrulline is bound at residue asparagine 135. Aspartate 136 is an ATP binding site. Arginine 139 and serine 192 together coordinate L-citrulline. Aspartate 194 provides a ligand contact to ATP. Positions 201, 203, and 280 each coordinate L-citrulline.

This sequence belongs to the argininosuccinate synthase family. Type 2 subfamily. Homotetramer.

It localises to the cytoplasm. The enzyme catalyses L-citrulline + L-aspartate + ATP = 2-(N(omega)-L-arginino)succinate + AMP + diphosphate + H(+). Its pathway is amino-acid biosynthesis; L-arginine biosynthesis; L-arginine from L-ornithine and carbamoyl phosphate: step 2/3. The protein is Argininosuccinate synthase of Escherichia coli O9:H4 (strain HS).